The following is an 846-amino-acid chain: Neurofilament medium polypeptide (846 aa).

A compositionally biased stretch (polar residues) spans 1 to 10 (MSYTLDSLGN). The disordered stretch occupies residues 1–52 (MSYTLDSLGNPSAYRRVPTETRSSFSRVSGSPSSGFRSQSWSRGSPSTVSSS). Residue Ser2 is modified to N-acetylserine. Positions 2 to 104 (SYTLDSLGNP…LSRSNEKEQL (103 aa)) are head. A compositionally biased stretch (low complexity) spans 22-45 (RSSFSRVSGSPSSGFRSQSWSRGS). A Phosphoserine modification is found at Ser31. At Arg43 the chain carries Omega-N-methylarginine. A glycan (O-linked (GlcNAc) threonine) is linked at Thr48. A Phosphoserine modification is found at Ser98. An IF rod domain is found at 100–411 (EKEQLQGLND…KLLEGEETRF (312 aa)). The coil 1A stretch occupies residues 104–135 (LQGLNDRFAGYIEKVHYLEQQNKEIEAEIHAL). Residues 136–148 (RQKQASHAQLGDA) are linker 1. Residues 149-247 (YDQEIRELRA…EEEVADLLAQ (99 aa)) are coil 1B. The residue at position 225 (Ser225) is a Phosphoserine. The segment at 248 to 264 (IQASHITVERKDYLKTD) is linker 12. The tract at residues 265-286 (ISTALKEIRSQLECHSDQNMHQ) is coil 2A. The linker 2 stretch occupies residues 287–290 (AEEW). Residues 291–411 (FKCRYAKLTE…KLLEGEETRF (121 aa)) form a coil 2B region. A Phosphotyrosine modification is found at Tyr319. Ser345, Ser417, and Ser429 each carry phosphoserine. A tail region spans residues 412-845 (STFSGSITGP…HAIVKEVTQG (434 aa)). Thr431 carries an O-linked (GlcNAc) threonine glycan. Phosphoserine is present on residues Ser467 and Ser483. A disordered region spans residues 483–783 (SAKEEKEEAE…GEDRSDDKVV (301 aa)). Over residues 489–499 (EEAEEKEEEPE) the composition is skewed to acidic residues. The span at 500-510 (VEKSPVKSPEA) shows a compositional bias: basic and acidic residues. Residues Ser503 and Ser507 each carry the phosphoserine modification. Over residues 511-533 (KEEEEGEKEEEEEGQEEEEEEDE) the composition is skewed to acidic residues. Residues 534 to 553 (GVKSDQAEEGGSEKEGSSEK) show a composition bias toward basic and acidic residues. Residues Ser537, Ser545, Ser550, and Ser551 each carry the phosphoserine modification. The segment covering 554 to 575 (DEGEQEEEGETEAEGEGEEAEA) has biased composition (acidic residues). Thr564 carries the phosphothreonine modification. A compositionally biased stretch (basic and acidic residues) spans 576–603 (KEEKKTEGKVEEMAIKEEIKVEKPEKAK). A phosphoserine mark is found at Ser604, Ser609, Ser643, Ser667, Ser687, Ser713, Ser721, Ser751, and Ser767. Basic and acidic residues-rich tracts occupy residues 610-675 (PVEE…KAVE) and 687-709 (SLEK…KAEE). Basic and acidic residues-rich tracts occupy residues 718 to 730 (GDKS…KEDI) and 746 to 758 (TQEK…EEKG). Over residues 769 to 783 (AEEKKGEDRSDDKVV) the composition is skewed to basic and acidic residues.

It belongs to the intermediate filament family. In terms of assembly, forms heterodimers with NEFL; which can further hetero-oligomerize (in vitro). Forms heterodimers with INA (in vitro). Post-translationally, there are a number of repeats of the tripeptide K-S-P, NFM is phosphorylated on a number of the serines in this motif. It is thought that phosphorylation of NFM results in the formation of interfilament cross bridges that are important in the maintenance of axonal caliber. In terms of processing, phosphorylation seems to play a major role in the functioning of the larger neurofilament polypeptides (NF-M and NF-H), the levels of phosphorylation being altered developmentally and coincidentally with a change in the neurofilament function. Phosphorylated in the head and rod regions by the PKC kinase PKN1, leading to the inhibition of polymerization. In terms of tissue distribution, expressed in the dorsal root ganglion neurons (at protein level).

It is found in the cytoplasm. The protein localises to the cytoskeleton. Its subcellular location is the cell projection. It localises to the axon. Neurofilaments usually contain three intermediate filament proteins: NEFL, NEFM, and NEFH which are involved in the maintenance of neuronal caliber. May additionally cooperate with the neuronal intermediate filament proteins PRPH and INA to form neuronal filamentous networks. The chain is Neurofilament medium polypeptide (Nefm) from Rattus norvegicus (Rat).